A 303-amino-acid polypeptide reads, in one-letter code: Coenzyme PQQ synthesis protein B (303 aa).

Belongs to the PqqB family.

It participates in cofactor biosynthesis; pyrroloquinoline quinone biosynthesis. May be involved in the transport of PQQ or its precursor to the periplasm. This is Coenzyme PQQ synthesis protein B from Pseudomonas syringae pv. syringae (strain B728a).